A 68-amino-acid polypeptide reads, in one-letter code: Large ribosomal subunit protein bL33c (68 aa).

It belongs to the bacterial ribosomal protein bL33 family.

The protein resides in the plastid. The chain is Large ribosomal subunit protein bL33c from Cuscuta reflexa (Southern Asian dodder).